The chain runs to 721 residues: Centlein (721 aa).

A coiled-coil region spans residues 52 to 164 (KNEKAISEQT…LRDENEEVVN (113 aa)). 2 disordered regions span residues 156-180 (RDEN…KSEM) and 259-288 (ETSQ…QQEV). Basic and acidic residues-rich tracts occupy residues 165–178 (PEEK…KAKS) and 267–284 (IEND…DSRA). Coiled coils occupy residues 345-515 (LLRE…EDLK) and 573-626 (QSEQ…TQKS). Phosphothreonine is present on Thr-658.

As to quaternary structure, interacts with CEP250 and CEP68. Interacts with NEK2; the interaction leads to phosphorylation of CNTLN. In terms of processing, phosphorylated directly or indirectly by NEK2.

It localises to the cytoplasm. It is found in the cytoskeleton. The protein localises to the microtubule organizing center. Its subcellular location is the centrosome. The protein resides in the centriole. Its function is as follows. Required for centrosome cohesion and recruitment of CEP68 to centrosomes. The polypeptide is Centlein (Rattus norvegicus (Rat)).